Consider the following 488-residue polypeptide: Glutamyl-tRNA(Gln) amidotransferase subunit A (488 aa).

Residues K77 and S152 each act as charge relay system in the active site. Residue S176 is the Acyl-ester intermediate of the active site.

Belongs to the amidase family. GatA subfamily. Heterotrimer of A, B and C subunits.

It catalyses the reaction L-glutamyl-tRNA(Gln) + L-glutamine + ATP + H2O = L-glutaminyl-tRNA(Gln) + L-glutamate + ADP + phosphate + H(+). Functionally, allows the formation of correctly charged Gln-tRNA(Gln) through the transamidation of misacylated Glu-tRNA(Gln) in organisms which lack glutaminyl-tRNA synthetase. The reaction takes place in the presence of glutamine and ATP through an activated gamma-phospho-Glu-tRNA(Gln). This chain is Glutamyl-tRNA(Gln) amidotransferase subunit A, found in Streptococcus pyogenes serotype M49 (strain NZ131).